A 142-amino-acid chain; its full sequence is Protein spalt-accessory (142 aa).

Residues 1-16 (MKLLIALFALVTAVNA) form the signal peptide. The segment at 75-142 (GFAGQGSPNQ…HHEHHGHHRH (68 aa)) is disordered. The span at 107–124 (GHFHENPHEYPEHHGDHH) shows a compositional bias: basic and acidic residues. Residues 125-142 (REHHEHHGHHEHHGHHRH) show a composition bias toward basic residues.

The protein localises to the secreted. Likely to be involved in the establishment of the head. In Drosophila melanogaster (Fruit fly), this protein is Protein spalt-accessory (sala).